Here is a 429-residue protein sequence, read N- to C-terminus: Bifunctional protein GlmU (429 aa).

Residues 1–223 are pyrophosphorylase; sequence MKTSILILAA…EDEFMGINDK (223 aa). UDP-N-acetyl-alpha-D-glucosamine-binding positions include 8-11, lysine 22, and 81-82; these read LAAG and GT. Aspartate 102 contacts Mg(2+). Residues glycine 135, glutamate 149, asparagine 164, and asparagine 221 each contribute to the UDP-N-acetyl-alpha-D-glucosamine site. Asparagine 221 serves as a coordination point for Mg(2+). The interval 224–244 is linker; it reads FELSIAENFMQEKIKKYWMQQ. Residues 245 to 429 are N-acetyltransferase; the sequence is GVIFHLPQST…KDYYYKKFQK (185 aa). UDP-N-acetyl-alpha-D-glucosamine-binding residues include arginine 308 and lysine 325. The active-site Proton acceptor is the histidine 336. Positions 339 and 350 each coordinate UDP-N-acetyl-alpha-D-glucosamine. Acetyl-CoA contacts are provided by residues 359–360, serine 378, alanine 396, and arginine 413; that span reads NY.

The protein in the N-terminal section; belongs to the N-acetylglucosamine-1-phosphate uridyltransferase family. In the C-terminal section; belongs to the transferase hexapeptide repeat family. In terms of assembly, homotrimer. Requires Mg(2+) as cofactor.

Its subcellular location is the cytoplasm. It carries out the reaction alpha-D-glucosamine 1-phosphate + acetyl-CoA = N-acetyl-alpha-D-glucosamine 1-phosphate + CoA + H(+). It catalyses the reaction N-acetyl-alpha-D-glucosamine 1-phosphate + UTP + H(+) = UDP-N-acetyl-alpha-D-glucosamine + diphosphate. Its pathway is nucleotide-sugar biosynthesis; UDP-N-acetyl-alpha-D-glucosamine biosynthesis; N-acetyl-alpha-D-glucosamine 1-phosphate from alpha-D-glucosamine 6-phosphate (route II): step 2/2. The protein operates within nucleotide-sugar biosynthesis; UDP-N-acetyl-alpha-D-glucosamine biosynthesis; UDP-N-acetyl-alpha-D-glucosamine from N-acetyl-alpha-D-glucosamine 1-phosphate: step 1/1. It functions in the pathway bacterial outer membrane biogenesis; LPS lipid A biosynthesis. In terms of biological role, catalyzes the last two sequential reactions in the de novo biosynthetic pathway for UDP-N-acetylglucosamine (UDP-GlcNAc). The C-terminal domain catalyzes the transfer of acetyl group from acetyl coenzyme A to glucosamine-1-phosphate (GlcN-1-P) to produce N-acetylglucosamine-1-phosphate (GlcNAc-1-P), which is converted into UDP-GlcNAc by the transfer of uridine 5-monophosphate (from uridine 5-triphosphate), a reaction catalyzed by the N-terminal domain. This is Bifunctional protein GlmU from Campylobacter jejuni subsp. jejuni serotype O:23/36 (strain 81-176).